We begin with the raw amino-acid sequence, 445 residues long: Argininosuccinate lyase (445 aa).

It belongs to the lyase 1 family. Argininosuccinate lyase subfamily.

The protein localises to the cytoplasm. The enzyme catalyses 2-(N(omega)-L-arginino)succinate = fumarate + L-arginine. It participates in amino-acid biosynthesis; L-arginine biosynthesis; L-arginine from L-ornithine and carbamoyl phosphate: step 3/3. The chain is Argininosuccinate lyase from Xylella fastidiosa (strain Temecula1 / ATCC 700964).